A 103-amino-acid chain; its full sequence is Large ribosomal subunit protein uL24 (103 aa).

The protein belongs to the universal ribosomal protein uL24 family. As to quaternary structure, part of the 50S ribosomal subunit.

In terms of biological role, one of two assembly initiator proteins, it binds directly to the 5'-end of the 23S rRNA, where it nucleates assembly of the 50S subunit. One of the proteins that surrounds the polypeptide exit tunnel on the outside of the subunit. The protein is Large ribosomal subunit protein uL24 of Geobacillus sp. (strain WCH70).